Reading from the N-terminus, the 313-residue chain is tRNA dimethylallyltransferase (313 aa).

Position 17-24 (17-24 (GPTASGKT)) interacts with ATP. 19 to 24 (TASGKT) lines the substrate pocket. Interaction with substrate tRNA regions lie at residues 42–45 (DSAL), 166–170 (QRLSR), and 247–252 (RCVGYR).

This sequence belongs to the IPP transferase family. In terms of assembly, monomer. It depends on Mg(2+) as a cofactor.

It catalyses the reaction adenosine(37) in tRNA + dimethylallyl diphosphate = N(6)-dimethylallyladenosine(37) in tRNA + diphosphate. In terms of biological role, catalyzes the transfer of a dimethylallyl group onto the adenine at position 37 in tRNAs that read codons beginning with uridine, leading to the formation of N6-(dimethylallyl)adenosine (i(6)A). The sequence is that of tRNA dimethylallyltransferase from Serratia proteamaculans (strain 568).